A 37-amino-acid polypeptide reads, in one-letter code: Esculentin-2Rb (37 aa).

Residues Cys-31 and Cys-37 are joined by a disulfide bond.

Expressed by the skin glands.

It localises to the secreted. In terms of biological role, antimicrobial peptide. This is Esculentin-2Rb from Pelophylax ridibundus (Marsh frog).